The following is a 249-amino-acid chain: MNEKIAILSTYSFVNIEEPANLIPKLLLIAKRKYVRGTILLSKEGFNGSFSGSYENVNLVLEELIKLTVPKDVNVKINYSDLHPFQKLKVRLKKEIVAMNVDDLNVDLFKGEYIESKDWDSFITKQDVIVIDTRNDYEVEIGTFKSAINPYTKTFKQFPAWVHQNEKLLKGKKIAMFCTGGIRCEKSTSLLKSIGYDDVYHLKGGILQYLEDTQNKNNLWQGECFVFDDRRAVEDDLSPSERHTRLPST.

A Rhodanese domain is found at 124 to 218 (TKQDVIVIDT…YLEDTQNKNN (95 aa)). Cys178 serves as the catalytic Cysteine persulfide intermediate.

Belongs to the TrhO family.

It carries out the reaction uridine(34) in tRNA + AH2 + O2 = 5-hydroxyuridine(34) in tRNA + A + H2O. Functionally, catalyzes oxygen-dependent 5-hydroxyuridine (ho5U) modification at position 34 in tRNAs. This chain is tRNA uridine(34) hydroxylase, found in Rickettsia canadensis (strain McKiel).